The following is a 279-amino-acid chain: Tryptophan 2,3-dioxygenase (279 aa).

Residues 48 to 52 (FIIQH), Y110, and R114 contribute to the substrate site. H237 contributes to the heme binding site. A substrate-binding site is contributed by T251.

This sequence belongs to the tryptophan 2,3-dioxygenase family. As to quaternary structure, homotetramer. The cofactor is heme.

The enzyme catalyses L-tryptophan + O2 = N-formyl-L-kynurenine. It functions in the pathway amino-acid degradation; L-tryptophan degradation via kynurenine pathway; L-kynurenine from L-tryptophan: step 1/2. In terms of biological role, heme-dependent dioxygenase that catalyzes the oxidative cleavage of the L-tryptophan (L-Trp) pyrrole ring and converts L-tryptophan to N-formyl-L-kynurenine. Catalyzes the oxidative cleavage of the indole moiety. The protein is Tryptophan 2,3-dioxygenase of Bradyrhizobium sp. (strain BTAi1 / ATCC BAA-1182).